The primary structure comprises 208 residues: MGNGMNKVIDGLYLGNIRDSENRDSLSRNGITHILSVCNNAKPVLEDMTYLCINAADASSQNLSQHFKESIRFIHECRLNGGACLVHCLAGVSRSTTVVVAYLMTVTSYGWQECLTAVKAVRSFVGPNYGFQQQLQEFQMKQVSEYQAWLRASYRSSPFKDQEQVEALLSLFAEQQQQGQQNDPEWMSQGSRIYPLSYNQYSASGSNR.

The region spanning 4–144 is the Tyrosine-protein phosphatase domain; sequence GMNKVIDGLY…LQEFQMKQVS (141 aa). Cys-88 acts as the Phosphocysteine intermediate in catalysis.

The protein belongs to the protein-tyrosine phosphatase family. Non-receptor class dual specificity subfamily.

It localises to the cytoplasm. It is found in the nucleus. It catalyses the reaction O-phospho-L-tyrosyl-[protein] + H2O = L-tyrosyl-[protein] + phosphate. It carries out the reaction O-phospho-L-seryl-[protein] + H2O = L-seryl-[protein] + phosphate. The enzyme catalyses O-phospho-L-threonyl-[protein] + H2O = L-threonyl-[protein] + phosphate. Its function is as follows. Activates the Jnk signaling pathway. Dephosphorylates and deactivates p38 and stress-activated protein kinase/c-Jun N-terminal kinase (SAPK/JNK). This chain is Dual specificity protein phosphatase 22-A, found in Danio rerio (Zebrafish).